The following is a 352-amino-acid chain: Beta-hexosaminidase (352 aa).

Residues Asp74, Arg82, Arg149, and 179–180 (KH) contribute to the substrate site. The active-site Proton donor/acceptor is His192. Asp263 (nucleophile) is an active-site residue.

The protein belongs to the glycosyl hydrolase 3 family. NagZ subfamily.

Its subcellular location is the cytoplasm. It carries out the reaction Hydrolysis of terminal non-reducing N-acetyl-D-hexosamine residues in N-acetyl-beta-D-hexosaminides.. The protein operates within cell wall biogenesis; peptidoglycan recycling. Plays a role in peptidoglycan recycling by cleaving the terminal beta-1,4-linked N-acetylglucosamine (GlcNAc) from peptide-linked peptidoglycan fragments, giving rise to free GlcNAc, anhydro-N-acetylmuramic acid and anhydro-N-acetylmuramic acid-linked peptides. The protein is Beta-hexosaminidase of Bordetella pertussis (strain Tohama I / ATCC BAA-589 / NCTC 13251).